Reading from the N-terminus, the 284-residue chain is 3-oxoadipate:acetyl-CoA acetyltransferase (284 aa).

His-47, His-49, and Glu-229 together coordinate Zn(2+).

It belongs to the BKACE family. Zn(2+) serves as cofactor.

The catalysed reaction is 3-oxoadipate + acetyl-CoA = acetoacetate + succinyl-CoA. Functionally, catalyzes the condensation of 3-oxoadipate (beta-ketoadipate) and acetyl-CoA, forming acetoacetate and succinyl-CoA. Is likely involved is the degradation of 3-oxoadipate through an alternative pathway, within catechol degradation. The polypeptide is 3-oxoadipate:acetyl-CoA acetyltransferase (Cupriavidus necator (strain ATCC 17699 / DSM 428 / KCTC 22496 / NCIMB 10442 / H16 / Stanier 337) (Ralstonia eutropha)).